A 453-amino-acid chain; its full sequence is tRNA modification GTPase MnmE (453 aa).

(6S)-5-formyl-5,6,7,8-tetrahydrofolate-binding residues include Arg-22, Glu-79, and Lys-119. One can recognise a TrmE-type G domain in the interval 215 to 376 (GMKVVIAGRP…LREHLKACMG (162 aa)). Asn-225 serves as a coordination point for K(+). GTP is bound by residues 225–230 (NAGKSS), 244–250 (TEIAGTT), 269–272 (DTAG), and 334–337 (NKAD). A Mg(2+)-binding site is contributed by Ser-229. Residues Thr-244, Ile-246, and Thr-249 each coordinate K(+). Mg(2+) is bound at residue Thr-250. Lys-453 is a binding site for (6S)-5-formyl-5,6,7,8-tetrahydrofolate.

Belongs to the TRAFAC class TrmE-Era-EngA-EngB-Septin-like GTPase superfamily. TrmE GTPase family. Homodimer. Heterotetramer of two MnmE and two MnmG subunits. K(+) serves as cofactor.

The protein resides in the cytoplasm. Exhibits a very high intrinsic GTPase hydrolysis rate. Involved in the addition of a carboxymethylaminomethyl (cmnm) group at the wobble position (U34) of certain tRNAs, forming tRNA-cmnm(5)s(2)U34. This Aeromonas hydrophila subsp. hydrophila (strain ATCC 7966 / DSM 30187 / BCRC 13018 / CCUG 14551 / JCM 1027 / KCTC 2358 / NCIMB 9240 / NCTC 8049) protein is tRNA modification GTPase MnmE.